Reading from the N-terminus, the 84-residue chain is Peptide Ctry2346 (84 aa).

The first 23 residues, 1–23, serve as a signal peptide directing secretion; sequence MKTQTLLFTFSLVLLMVATQTEA. Leu33 carries the leucine amide modification. Positions 37–84 are excised as a propeptide; the sequence is GLLDNLLGKRGLLFGKRALTNQDLFDLAYDPSLSAADMDALEMLLENY.

The protein belongs to the non-disulfide-bridged peptide (NDBP) superfamily. Short antimicrobial peptide (group 4) family. In terms of tissue distribution, expressed by the venom gland.

The protein resides in the secreted. Its subcellular location is the target cell membrane. In terms of biological role, antimicrobial peptide. This Chaerilus tryznai (Scorpion) protein is Peptide Ctry2346.